The chain runs to 332 residues: ADP-L-glycero-D-manno-heptose-6-epimerase (332 aa).

Residues 11–12 (FI), 32–33 (DN), Lys-39, Lys-54, 76–80 (EGACS), and Asn-93 contribute to the NADP(+) site. Tyr-140 (proton acceptor) is an active-site residue. Residue Lys-144 coordinates NADP(+). Asn-170 serves as a coordination point for substrate. NADP(+) contacts are provided by Val-171 and Lys-179. The active-site Proton acceptor is Lys-179. Substrate-binding positions include Arg-181, His-188, 202 to 205 (FEGS), Arg-215, and Tyr-294.

Belongs to the NAD(P)-dependent epimerase/dehydratase family. HldD subfamily. In terms of assembly, homopentamer. NADP(+) serves as cofactor.

It catalyses the reaction ADP-D-glycero-beta-D-manno-heptose = ADP-L-glycero-beta-D-manno-heptose. Its pathway is nucleotide-sugar biosynthesis; ADP-L-glycero-beta-D-manno-heptose biosynthesis; ADP-L-glycero-beta-D-manno-heptose from D-glycero-beta-D-manno-heptose 7-phosphate: step 4/4. In terms of biological role, catalyzes the interconversion between ADP-D-glycero-beta-D-manno-heptose and ADP-L-glycero-beta-D-manno-heptose via an epimerization at carbon 6 of the heptose. The protein is ADP-L-glycero-D-manno-heptose-6-epimerase of Dechloromonas aromatica (strain RCB).